We begin with the raw amino-acid sequence, 463 residues long: Phosphomannomutase (463 aa).

Ser103 acts as the Phosphoserine intermediate in catalysis. Mg(2+) is bound by residues Ser103, Asp248, Asp250, and Asp252.

Belongs to the phosphohexose mutase family. Mg(2+) is required as a cofactor.

Its subcellular location is the cell membrane. It carries out the reaction alpha-D-mannose 1-phosphate = D-mannose 6-phosphate. The protein operates within nucleotide-sugar biosynthesis; GDP-alpha-D-mannose biosynthesis; alpha-D-mannose 1-phosphate from D-fructose 6-phosphate: step 2/2. Its pathway is bacterial outer membrane biogenesis; LPS O-antigen biosynthesis. Functionally, involved in GDP-mannose biosynthesis which serves as the activated sugar nucleotide precursor for mannose residues in cell surface polysaccharides. This chain is Phosphomannomutase (rfbB), found in Vibrio cholerae serotype O1 (strain ATCC 39315 / El Tor Inaba N16961).